We begin with the raw amino-acid sequence, 467 residues long: Cis-zeatin O-glucosyltransferase 1 (467 aa).

His21 functions as the Proton acceptor in the catalytic mechanism. 2 residues coordinate an anthocyanidin: His21 and Asn91. Catalysis depends on Asp127, which acts as the Charge relay. Positions 343, 345, 360, 363, 364, 365, 368, 384, and 385 each coordinate UDP-alpha-D-glucose.

The protein belongs to the UDP-glycosyltransferase family. Highly expressed in root. Expressed at lower level in kernel and cob. Weakly expressed in leaves. Weakly or not expressed in stems.

The catalysed reaction is cis-zeatin + UDP-alpha-D-glucose = O-beta-D-glucosyl-cis-zeatin + UDP + H(+). Its function is as follows. Utilizes UDP-glucose as the sugar donor and catalyzes the formation of O-beta-D-glucosyl-cis-zeatin from cis-zeatin. May regulate active versus storage forms of cytokinins and could have an impact on seed growth. This is Cis-zeatin O-glucosyltransferase 1 (CISZOG1) from Zea mays (Maize).